The primary structure comprises 323 residues: Serine acetyltransferase 2 (323 aa).

A disordered region spans residues alanine 302–serine 323. Basic and acidic residues predominate over residues aspartate 313–serine 323.

This sequence belongs to the transferase hexapeptide repeat family. Homomultimer. As to expression, ubiquitously expressed at low levels. Localized in vascular tissues, particularly in phloem.

It localises to the cytoplasm. The enzyme catalyses L-serine + acetyl-CoA = O-acetyl-L-serine + CoA. It participates in amino-acid biosynthesis; L-cysteine biosynthesis; L-cysteine from L-serine: step 1/2. The chain is Serine acetyltransferase 2 from Arabidopsis thaliana (Mouse-ear cress).